A 235-amino-acid chain; its full sequence is Thiamine import ATP-binding protein ThiQ (235 aa).

Positions 2–230 constitute an ABC transporter domain; that stretch reads LKLENLTYRY…TVPEAAILGM (229 aa). Position 32-39 (32-39) interacts with ATP; sequence GPSGAGKS.

This sequence belongs to the ABC transporter superfamily. Thiamine importer (TC 3.A.1.19.1) family. In terms of assembly, the complex is composed of two ATP-binding proteins (ThiQ), two transmembrane proteins (ThiP) and a solute-binding protein (ThiB).

It localises to the cell inner membrane. It carries out the reaction thiamine(out) + ATP + H2O = thiamine(in) + ADP + phosphate + H(+). Functionally, part of the ABC transporter complex ThiBPQ involved in thiamine import. Responsible for energy coupling to the transport system. The polypeptide is Thiamine import ATP-binding protein ThiQ (Photorhabdus laumondii subsp. laumondii (strain DSM 15139 / CIP 105565 / TT01) (Photorhabdus luminescens subsp. laumondii)).